A 27-amino-acid polypeptide reads, in one-letter code: NLYQFKNMIQCTTKRSVLEFMEYGCYC.

The protein belongs to the phospholipase A2 family. Group I subfamily. Requires Ca(2+) as cofactor. As to expression, expressed by the venom gland.

The protein localises to the secreted. The enzyme catalyses a 1,2-diacyl-sn-glycero-3-phosphocholine + H2O = a 1-acyl-sn-glycero-3-phosphocholine + a fatty acid + H(+). In terms of biological role, snake venom phospholipase A2 (PLA2) that inhibits neuromuscular transmission by blocking acetylcholine release from the nerve termini. PLA2 catalyzes the calcium-dependent hydrolysis of the 2-acyl groups in 3-sn-phosphoglycerides. The sequence is that of Phospholipase A2 1 from Micrurus nigrocinctus (Central American coral snake).